Here is a 197-residue protein sequence, read N- to C-terminus: ATP-dependent Clp protease proteolytic subunit (197 aa).

The active-site Nucleophile is serine 98. Histidine 123 is an active-site residue.

The protein belongs to the peptidase S14 family. As to quaternary structure, fourteen ClpP subunits assemble into 2 heptameric rings which stack back to back to give a disk-like structure with a central cavity, resembling the structure of eukaryotic proteasomes.

The protein localises to the cytoplasm. The catalysed reaction is Hydrolysis of proteins to small peptides in the presence of ATP and magnesium. alpha-casein is the usual test substrate. In the absence of ATP, only oligopeptides shorter than five residues are hydrolyzed (such as succinyl-Leu-Tyr-|-NHMec, and Leu-Tyr-Leu-|-Tyr-Trp, in which cleavage of the -Tyr-|-Leu- and -Tyr-|-Trp bonds also occurs).. Cleaves peptides in various proteins in a process that requires ATP hydrolysis. Has a chymotrypsin-like activity. Plays a major role in the degradation of misfolded proteins. The polypeptide is ATP-dependent Clp protease proteolytic subunit (Anaplasma phagocytophilum (strain HZ)).